The sequence spans 1029 residues: Ig-like and fibronectin type-III domain-containing protein 1 (1029 aa).

An N-terminal signal peptide occupies residues 1–22; it reads MCNVAEDPSSFSTITIATTCRA. Over 23–918 the chain is Extracellular; sequence EWPKVSPCIA…RRSASKGSSS (896 aa). 4 N-linked (GlcNAc...) asparagine glycosylation sites follow: Asn-36, Asn-93, Asn-120, and Asn-165. The region spanning 90–181 is the Fibronectin type-III 1 domain; it reads APGNVTISEL…TAKLFSTLPT (92 aa). In terms of domain architecture, WR1 spans 185-227; that stretch reads PLCTIGEPIYMNDGRVMICDAVNPCPNGFRCTGAGSDLSYCCP. Asn-257, Asn-374, Asn-409, Asn-442, Asn-482, Asn-507, and Asn-552 each carry an N-linked (GlcNAc...) asparagine glycan. Fibronectin type-III domains lie at 330–417 and 427–523; these read AVRN…TKPA and APEK…AQKD. The 92-residue stretch at 619-710 folds into the Ig-like C2-type domain; sequence ASVTMKKDKI…SRVEASSEVI (92 aa). A disulfide bond links Cys-640 and Cys-693. N-linked (GlcNAc...) asparagine glycosylation occurs at Asn-753. A Fibronectin type-III 4 domain is found at 817–909; the sequence is APSEVSNVRI…SAIPKDSEPR (93 aa). The chain crosses the membrane as a helical span at residues 919-939; it reads AFWIVVILVVFGVLIAGLAVL. The Cytoplasmic segment spans residues 940 to 1029; sequence SKRRELPYPI…NGMRYAKLET (90 aa). The tract at residues 988–1021 is disordered; sequence SATTGTAAATQSEWQSANLEANSTTDNSHEYRNG. Positions 998-1013 are enriched in polar residues; the sequence is QSEWQSANLEANSTTD.

It localises to the cell membrane. This chain is Ig-like and fibronectin type-III domain-containing protein 1, found in Caenorhabditis elegans.